Here is a 317-residue protein sequence, read N- to C-terminus: Adenine deaminase (317 aa).

3 residues coordinate Zn(2+): histidine 14, histidine 16, and histidine 194. Glutamate 197 acts as the Proton donor in catalysis. Aspartate 275 is a Zn(2+) binding site. Aspartate 276 contributes to the substrate binding site.

It belongs to the metallo-dependent hydrolases superfamily. Adenosine and AMP deaminases family. Adenine deaminase type 2 subfamily. The cofactor is Zn(2+).

It carries out the reaction adenine + H2O + H(+) = hypoxanthine + NH4(+). In terms of biological role, catalyzes the hydrolytic deamination of adenine to hypoxanthine. Plays an important role in the purine salvage pathway and in nitrogen catabolism. The polypeptide is Adenine deaminase (Pseudomonas fluorescens (strain Pf0-1)).